The following is a 151-amino-acid chain: MGVKEIVSNRKAFHHYEVLETLDAGIVLTGTEIKSLRDHGGNLGDAYVTISKGEAWLLQSSIAPYRFGNINNHEERRKRKLLLHKYEIHKLDARISQKGLTVVPLSFFFSKGFVKVRIGCCRGKKAHDKRQSIIEREKNRELAAAMKRSYR.

The protein belongs to the SmpB family.

The protein resides in the cytoplasm. In terms of biological role, required for rescue of stalled ribosomes mediated by trans-translation. Binds to transfer-messenger RNA (tmRNA), required for stable association of tmRNA with ribosomes. tmRNA and SmpB together mimic tRNA shape, replacing the anticodon stem-loop with SmpB. tmRNA is encoded by the ssrA gene; the 2 termini fold to resemble tRNA(Ala) and it encodes a 'tag peptide', a short internal open reading frame. During trans-translation Ala-aminoacylated tmRNA acts like a tRNA, entering the A-site of stalled ribosomes, displacing the stalled mRNA. The ribosome then switches to translate the ORF on the tmRNA; the nascent peptide is terminated with the 'tag peptide' encoded by the tmRNA and targeted for degradation. The ribosome is freed to recommence translation, which seems to be the essential function of trans-translation. This Chlamydia trachomatis serovar A (strain ATCC VR-571B / DSM 19440 / HAR-13) protein is SsrA-binding protein.